We begin with the raw amino-acid sequence, 151 residues long: Pseudo histidine-containing phosphotransfer protein 2 (151 aa).

The HPt domain occupies 38-133 (SPNFVEEVAA…ATLKQKLESY (96 aa)).

In terms of biological role, functions as a two-component phosphorelay mediator between cytokinin sensor histidine kinases and response regulators (B-type ARRs). Plays an important role in propagating cytokinin signal transduction. This Oryza sativa subsp. japonica (Rice) protein is Pseudo histidine-containing phosphotransfer protein 2.